The primary structure comprises 490 residues: Transcription factor lin-26 (490 aa).

3 disordered regions span residues 96-176 (KYKD…PLHQ), 236-262 (TPEY…EPDS), and 302-326 (ASKP…KKHR). Residues 101–110 (SSSPESPSTT) are PEST. Low complexity predominate over residues 101–120 (SSSPESPSTTASTAAQHTPP). 2 stretches are compositionally biased toward polar residues: residues 123 to 132 (AVSTPTSINT) and 151 to 176 (NLST…PLHQ). A compositionally biased stretch (basic and acidic residues) spans 236 to 260 (TPEYDDNHHSETISKASSEDLKTEP). The C2H2-type; degenerate zinc-finger motif lies at 353 to 381 (YKCALCGKPTTLNSTGSRWNLLRHVIMIH).

In terms of tissue distribution, expressed in somatic gonads and germline precursors until the 50-cell stage. After the 100-cell stage, expression is seen in differentiating hypodermal and support cells (at protein level).

It localises to the nucleus. In terms of biological role, probable transcription factor. Required to specify the fates of hypodermal and neuron-associated support cells. Functions during vulval development, playing a role in vulval precursor cell fate specification. Positively modulates expression of homeobox protein lin-39, perhaps by binding to regulatory regions of the lin-39 gene, acting in the vulval lineage. The polypeptide is Transcription factor lin-26 (Caenorhabditis elegans).